The following is a 235-amino-acid chain: Endonuclease V (235 aa).

Positions 47 and 115 each coordinate Mg(2+).

It belongs to the endonuclease V family. The cofactor is Mg(2+).

It is found in the cytoplasm. It catalyses the reaction Endonucleolytic cleavage at apurinic or apyrimidinic sites to products with a 5'-phosphate.. Its function is as follows. DNA repair enzyme involved in the repair of deaminated bases. Selectively cleaves double-stranded DNA at the second phosphodiester bond 3' to a deoxyinosine leaving behind the intact lesion on the nicked DNA. The chain is Endonuclease V from Myxococcus xanthus (strain DK1622).